A 919-amino-acid polypeptide reads, in one-letter code: Transcriptional regulatory protein EDS1 (919 aa).

The tract at residues 1 to 54 (MSHHVPNLYGTPIRDPHEHKRNSASMGEVNQSVSSRNCERGSEKGTKQRKKASR) is disordered. Over residues 23–36 (SASMGEVNQSVSSR) the composition is skewed to polar residues. Residues 37-46 (NCERGSEKGT) show a composition bias toward basic and acidic residues. A DNA-binding region (zn(2)-C6 fungal-type) is located at residues 56–85 (CDQCRRKRIKCRFDKHTGVCQGCLEVGEKC). A disordered region spans residues 297–338 (AGCPNKKLGTDGRSDKWDKNSTWKPVYRSSNPSHPSTEKNVS). Residues 304-317 (LGTDGRSDKWDKNS) show a composition bias toward basic and acidic residues. Residues 318-338 (TWKPVYRSSNPSHPSTEKNVS) show a composition bias toward polar residues.

Binds DNA in a sequence-specific manner.

The protein resides in the nucleus. This chain is Transcriptional regulatory protein EDS1 (EDS1), found in Saccharomyces cerevisiae (strain Lalvin EC1118 / Prise de mousse) (Baker's yeast).